We begin with the raw amino-acid sequence, 341 residues long: uncharacterized protein (341 aa).

The next 4 membrane-spanning stretches (helical) occupy residues 8–28 (LMLTFNEPLYLFLLVIFPLII), 63–83 (LMYFFTYSFLYLAAMVMVFAL), 171–191 (IYIMDLGNGSALGLGISIALS), and 317–337 (EFLVLAFCLLLVYFIFSKIFL). Residues 101 to 305 (DIVIVLDISP…SKKENLERKI (205 aa)) enclose the VWFA domain.

It localises to the cell membrane. This is an uncharacterized protein from Borreliella burgdorferi (strain ATCC 35210 / DSM 4680 / CIP 102532 / B31) (Borrelia burgdorferi).